The chain runs to 212 residues: SOSS complex subunit B1 (212 aa).

Positions 22–92 form a DNA-binding region, OB; sequence IVLETGRVTK…TLYTGRGGDL (71 aa). Positions 110–212 are disordered; that stretch reads EPNPEYNTQQ…GKETRRSSKR (103 aa). The span at 114–130 shows a compositional bias: polar residues; it reads EYNTQQAPNKSVQNNDN. A Phosphothreonine; by ATM modification is found at threonine 117. Residues 131–148 show a composition bias toward low complexity; sequence SPTAPQATTGPPAASPAS. Residues 149–160 are compositionally biased toward polar residues; sequence ENQNGNGLSTQL. A compositionally biased stretch (low complexity) spans 166–178; sequence PHPSHTPSHPPST.

The protein belongs to the SOSS-B family. SOSS-B1 subfamily. Component of the SOSS complex, composed of SOSS-B (SOSS-B1/NABP2 or SOSS-B2/NABP1), SOSS-A/INTS3 and SOSS-C/INIP. SOSS complexes containing SOSS-B1/NABP2 are more abundant than complexes containing SOSS-B2/NABP1. Directly interacts with ATM, SOSS-A/INTS3 and RAD51. Interacts with INTS7. In terms of processing, phosphorylated by ATM in response to DNA damage. Phosphorylation prevents degradation by the proteasome, hence stabilization of the protein and accumulation within cells. Post-translationally, ubiquitinated in a FBXL5-dependent manner, leading to proteasomal degradation.

It localises to the nucleus. Its function is as follows. Component of the SOSS complex, a multiprotein complex that functions downstream of the MRN complex to promote DNA repair and G2/M checkpoint. In the SOSS complex, acts as a sensor of single-stranded DNA that binds to single-stranded DNA, in particular to polypyrimidines. The SOSS complex associates with DNA lesions and influences diverse endpoints in the cellular DNA damage response including cell-cycle checkpoint activation, recombinational repair and maintenance of genomic stability. Required for efficient homologous recombination-dependent repair of double-strand breaks (DSBs) and ATM-dependent signaling pathways. The polypeptide is SOSS complex subunit B1 (Nabp2) (Mus musculus (Mouse)).